Here is a 337-residue protein sequence, read N- to C-terminus: Pyridoxal 5'-phosphate synthase subunit PdxS (337 aa).

Asp-65 is a binding site for D-ribose 5-phosphate. Lys-122 (schiff-base intermediate with D-ribose 5-phosphate) is an active-site residue. Position 194 (Gly-194) interacts with D-ribose 5-phosphate. Lys-206 provides a ligand contact to D-glyceraldehyde 3-phosphate. D-ribose 5-phosphate is bound by residues Gly-255 and 276 to 277 (GS).

The protein belongs to the PdxS/SNZ family. As to quaternary structure, in the presence of PdxT, forms a dodecamer of heterodimers.

It carries out the reaction aldehydo-D-ribose 5-phosphate + D-glyceraldehyde 3-phosphate + L-glutamine = pyridoxal 5'-phosphate + L-glutamate + phosphate + 3 H2O + H(+). It participates in cofactor biosynthesis; pyridoxal 5'-phosphate biosynthesis. Functionally, catalyzes the formation of pyridoxal 5'-phosphate from ribose 5-phosphate (RBP), glyceraldehyde 3-phosphate (G3P) and ammonia. The ammonia is provided by the PdxT subunit. Can also use ribulose 5-phosphate and dihydroxyacetone phosphate as substrates, resulting from enzyme-catalyzed isomerization of RBP and G3P, respectively. This chain is Pyridoxal 5'-phosphate synthase subunit PdxS, found in Pyrobaculum arsenaticum (strain DSM 13514 / JCM 11321 / PZ6).